Consider the following 211-residue polypeptide: Ribonuclease P protein component 3 (211 aa).

Belongs to the eukaryotic/archaeal RNase P protein component 3 family. Consists of a catalytic RNA component and at least 4-5 protein subunits.

The protein localises to the cytoplasm. It carries out the reaction Endonucleolytic cleavage of RNA, removing 5'-extranucleotides from tRNA precursor.. Functionally, part of ribonuclease P, a protein complex that generates mature tRNA molecules by cleaving their 5'-ends. This is Ribonuclease P protein component 3 from Aeropyrum pernix (strain ATCC 700893 / DSM 11879 / JCM 9820 / NBRC 100138 / K1).